Consider the following 274-residue polypeptide: 2,3,4,5-tetrahydropyridine-2,6-dicarboxylate N-succinyltransferase (274 aa).

The protein belongs to the transferase hexapeptide repeat family.

It localises to the cytoplasm. The enzyme catalyses (S)-2,3,4,5-tetrahydrodipicolinate + succinyl-CoA + H2O = (S)-2-succinylamino-6-oxoheptanedioate + CoA. The protein operates within amino-acid biosynthesis; L-lysine biosynthesis via DAP pathway; LL-2,6-diaminopimelate from (S)-tetrahydrodipicolinate (succinylase route): step 1/3. This chain is 2,3,4,5-tetrahydropyridine-2,6-dicarboxylate N-succinyltransferase, found in Escherichia fergusonii (strain ATCC 35469 / DSM 13698 / CCUG 18766 / IAM 14443 / JCM 21226 / LMG 7866 / NBRC 102419 / NCTC 12128 / CDC 0568-73).